A 93-amino-acid polypeptide reads, in one-letter code: Zinc metalloproteinase-disintegrin-like leucurogin (93 aa).

One can recognise a Disintegrin domain in the interval 8–93 (PPVCGNELLE…SECPADVGHK (86 aa)). Residues valine 10, asparagine 13, leucine 15, glutamate 17, glutamate 20, and aspartate 23 each coordinate Ca(2+). 7 disulfide bridges follow: cysteine 11-cysteine 40, cysteine 22-cysteine 35, cysteine 24-cysteine 30, cysteine 34-cysteine 57, cysteine 48-cysteine 54, cysteine 53-cysteine 79, and cysteine 66-cysteine 86. The D/ECD-tripeptide motif lies at 72–74 (ECD). Residues aspartate 74, proline 75, glutamate 77, aspartate 89, and valine 90 each coordinate Ca(2+). The segment at 74-93 (DPAEHCTGQSSECPADVGHK) is disordered.

The protein belongs to the venom metalloproteinase (M12B) family. P-III subfamily. As to quaternary structure, monomer. Requires Zn(2+) as cofactor. In terms of processing, N-glycosylated. In terms of tissue distribution, expressed by the venom gland.

The protein resides in the secreted. Snake venom zinc metalloprotease that possesses hemorrhagic activity. The disintegrin-like domain has been expressed and named leucurogin. This recombinant disintegrin is able to inhibit collagen-induced platelet aggregation but not ADP- or arachidonic acid-induced platelet aggregation. Furthermore, it inhibits the adhesion of human fibroblasts to collagen type I. It also reduces adhesion and migration of human fibroblasts and inhibits migration and proliferation of human and mouse melanoma cell lines (BLM, and B16-F10-Nex2). In vitro, it inhibits the vascular structures formation by endothelial cells. In addition, it inhibits the growth of experimental Ehrlich tumor and has anti-angiogenesis effect on the sponge implant model. In vivo, when intraperitoneally injected into mice, it inhibits lung metastasis of B16F10 Nex-2 cells. In the treatment of human melanoma, grafted intradermally in the nude mice flank, it inhibits tumor growth. This Bothrops leucurus (Whitetail lancehead) protein is Zinc metalloproteinase-disintegrin-like leucurogin.